Consider the following 49-residue polypeptide: Large ribosomal subunit protein bL33 (49 aa).

It belongs to the bacterial ribosomal protein bL33 family.

This chain is Large ribosomal subunit protein bL33, found in Lachnoclostridium phytofermentans (strain ATCC 700394 / DSM 18823 / ISDg) (Clostridium phytofermentans).